The following is a 191-amino-acid chain: Dirigent protein 3 (191 aa).

The signal sequence occupies residues 1–21 (MSKLILILTAQILLLTATALA). N-linked (GlcNAc...) asparagine glycosylation is found at N96 and N131.

This sequence belongs to the plant dirigent protein family. In terms of assembly, homodimer.

The protein localises to the secreted. It is found in the extracellular space. Its subcellular location is the apoplast. In terms of biological role, dirigent proteins impart stereoselectivity on the phenoxy radical-coupling reaction, yielding optically active lignans from two molecules of coniferyl alcohol in the biosynthesis of lignans, flavonolignans, and alkaloids and thus plays a central role in plant secondary metabolism. The protein is Dirigent protein 3 (DIR3) of Arabidopsis thaliana (Mouse-ear cress).